The following is a 302-amino-acid chain: Phosphate butyryltransferase (302 aa).

Belongs to the phosphate acetyltransferase and butyryltransferase family.

It carries out the reaction butanoyl-CoA + phosphate = butanoyl phosphate + CoA. It functions in the pathway lipid metabolism; butanoate metabolism. Catalyzes the conversion of butyryl-CoA through butyryl phosphate to butyrate. This Clostridium beijerinckii (strain ATCC 51743 / NCIMB 8052) (Clostridium acetobutylicum) protein is Phosphate butyryltransferase (ptb).